The chain runs to 162 residues: UPF0114 protein Sden_0436 (162 aa).

The next 3 helical transmembrane spans lie at 15 to 35 (IMAPIYLGLSLILFALGIKFF), 53 to 73 (LVLITLSLIDITLVGGLLIMV), and 136 to 156 (IMWYLLIHITFVLSAFAMGYL).

This sequence belongs to the UPF0114 family.

Its subcellular location is the cell membrane. In Shewanella denitrificans (strain OS217 / ATCC BAA-1090 / DSM 15013), this protein is UPF0114 protein Sden_0436.